A 464-amino-acid polypeptide reads, in one-letter code: Cysteine--tRNA ligase (464 aa).

Cys-28 is a Zn(2+) binding site. The short motif at 30-40 is the 'HIGH' region element; it reads PTVYDTAHIGN. Residues Cys-212, His-237, and Glu-241 each contribute to the Zn(2+) site. The short motif at 270-274 is the 'KMSKS' region element; sequence KMSKS. Residue Lys-273 participates in ATP binding.

It belongs to the class-I aminoacyl-tRNA synthetase family. As to quaternary structure, monomer. Zn(2+) is required as a cofactor.

The protein localises to the cytoplasm. It catalyses the reaction tRNA(Cys) + L-cysteine + ATP = L-cysteinyl-tRNA(Cys) + AMP + diphosphate. The sequence is that of Cysteine--tRNA ligase from Wolbachia pipientis subsp. Culex pipiens (strain wPip).